Consider the following 288-residue polypeptide: MQIPQAPWPVVWAVLQLGWRPGWFLDSPDRPWNPPTFSPALLVVTEGDNATFTCSFSNTSESFVLNWYRMSPSNQTDKLAAFPEDRSQPGQDCRFRVTQLPNGRDFHMSVVRARRNDSGTYLCGAISLAPKAQIKESLRAELRVTERRAEVPTAHPSPSPRPAGQFQTLVVGVVGGLLGSLVLLVWVLAVICSRAARGTIGARRTGQPLKEDPSAVPVFSVDYGELDFQWREKTPEPPVPCVPEQTEYATIVFPSGMGTSSPARRGSADGPRSAQPLRPEDGHCSWPL.

A signal peptide spans 1-24 (MQIPQAPWPVVWAVLQLGWRPGWF). The tract at residues 25–34 (LDSPDRPWNP) is nivolumab binding. At 25-170 (LDSPDRPWNP…RPAGQFQTLV (146 aa)) the chain is on the extracellular side. Residues 35-145 (PTFSPALLVV…ESLRAELRVT (111 aa)) enclose the Ig-like V-type domain. N-linked (GlcNAc...) asparagine glycosylation is found at N49, N58, N74, and N116. A disulfide bridge connects residues C54 and C123. Residues 70–77 (MSPSNQTD) are interaction with CD274/PDCD1L1. Positions 74 to 99 (NQTDKLAAFPEDRSQPGQDCRFRVTQ) are pembrolizumab binding. The helical transmembrane segment at 171-191 (VGVVGGLLGSLVLLVWVLAVI) threads the bilayer. Over 192-288 (CSRAARGTIG…PEDGHCSWPL (97 aa)) the chain is Cytoplasmic. The ITIM motif signature appears at 221-226 (VDYGEL). Y223 is modified (phosphotyrosine). A Glycyl lysine isopeptide (Lys-Gly) (interchain with G-Cter in ubiquitin) cross-link involves residue K233. A Phosphothreonine; by MAPK3 modification is found at T234. The short motif at 247–251 (EYATI) is the ITSM motif element. Phosphotyrosine is present on Y248. A disordered region spans residues 254–288 (PSGMGTSSPARRGSADGPRSAQPLRPEDGHCSWPL). Positions 278–288 (RPEDGHCSWPL) are enriched in basic and acidic residues.

In terms of assembly, monomer. Interacts with CD274/PDCD1L1. Interacts with CD273/PDCD1LG2. Interacts with FBXO38; leading to ubiquitination and degradation of PDCD1 by the proteasome. Post-translationally, ubiquitinated at Lys-233 by the SCF(FBXO38) complex, leading to its proteasomal degradation. Ubiquitinated via 'Lys-48'-linked polyubiquitin chains. Deubiquitinated and thus stabilized by USP5. In terms of processing, tyrosine phosphorylated at Tyr-223 (within ITIM motif) and Tyr-248 (ITSM motif) upon ligand binding. Phosphorylation at Tyr-248 promotes the recruitment of the protein tyrosine phosphatase PTPN11/SHP-2 that mediates dephosphorylation of key TCR proximal signaling molecules, such as ZAP70, PRKCQ/PKCtheta and CD247/CD3zeta. Phosphorylation at Thr-234 promotes the recruitment of the deubiquitinase USP5. N-glycosylation at Asn-58 contains at least two N-acetylglucosamine units and one fucose. N-glycosylation does not affect binding to nivolumab drug.

Its subcellular location is the cell membrane. Its activity is regulated as follows. Inhibited by pembrolizumab (also named MK-3475 or lambrolizumab), a monoclonal antibody that prevents the interaction with CD274/PDCD1L1. Inhibited by nivolumab (also named ONO-4538, BMS-936558 or Opdivo), a monoclonal antibody that prevents the interaction with CD274/PDCD1L1. The interaction with nivolumab is not dependent on glycosylation and depends on a loop at the N-terminus (N-terminal loop, corresponding to residues 25-34). Targeting the interaction between PDCD1 and CD274/PDCD1L1 with pembrolizumab and nivolumab antibodies has demonstrated great promise as a strategy for controlling and eradicating cancer. Pembrolizumab and nivolumab are used for treatment of patients with advanced melanoma. These antibodies are also effective against other cancers, such as non-small cell lung cancer, renal cell carcinoma, bladder cancer and Hodgkin's lymphoma. Functionally, inhibitory receptor on antigen activated T-cells that plays a critical role in induction and maintenance of immune tolerance to self. Delivers inhibitory signals upon binding to ligands CD274/PDCD1L1 and CD273/PDCD1LG2. Following T-cell receptor (TCR) engagement, PDCD1 associates with CD3-TCR in the immunological synapse and directly inhibits T-cell activation. Suppresses T-cell activation through the recruitment of PTPN11/SHP-2: following ligand-binding, PDCD1 is phosphorylated within the ITSM motif, leading to the recruitment of the protein tyrosine phosphatase PTPN11/SHP-2 that mediates dephosphorylation of key TCR proximal signaling molecules, such as ZAP70, PRKCQ/PKCtheta and CD247/CD3zeta. Its function is as follows. The PDCD1-mediated inhibitory pathway is exploited by tumors to attenuate anti-tumor immunity and escape destruction by the immune system, thereby facilitating tumor survival. The interaction with CD274/PDCD1L1 inhibits cytotoxic T lymphocytes (CTLs) effector function. The blockage of the PDCD1-mediated pathway results in the reversal of the exhausted T-cell phenotype and the normalization of the anti-tumor response, providing a rationale for cancer immunotherapy. The polypeptide is Programmed cell death protein 1 (Homo sapiens (Human)).